A 432-amino-acid polypeptide reads, in one-letter code: MVSCLCFRPSRKTKLKDKSHKRSIRNQTSSSSAQPAGTAKEVDSSSSQTVVQDSSRYRCQIFSYRELAIATNSFRNESLIGRGGFGTVYKGRLSTGQNIAVKMLDQSGIQGDKEFLVEVLMLSLLHHRNLVHLFGYCAEGDQRLVVYEYMPLGSVEDHLYDLSEGQEALDWKTRMKIALGAAKGLAFLHNEAQPPVIYRDLKTSNILLDHDYKPKLSDFGLAKFGPSDDMSHVSTRVMGTHGYCAPEYANTGKLTLKSDIYSFGVVLLELISGRKALMPSSECVGNQSRYLVHWARPLFLNGRIRQIVDPRLARKGGFSNILLYRGIEVAFLCLAEEANARPSISQVVECLKYIIDHTIRKERRTRRRLLGGNKDGAGTSRSPDETMMRMLEEEEEYVTSEEAIERRRVIVDDARTWAGMNRRGATPPTPTP.

Residues C4 and C6 are each lipidated (S-palmitoyl cysteine). The span at 15–24 shows a compositional bias: basic residues; the sequence is LKDKSHKRSI. The segment at 15–47 is disordered; it reads LKDKSHKRSIRNQTSSSSAQPAGTAKEVDSSSS. Positions 25-35 are enriched in polar residues; it reads RNQTSSSSAQP. Phosphoserine occurs at positions 44 and 47. Residues 74–354 enclose the Protein kinase domain; it reads FRNESLIGRG…SQVVECLKYI (281 aa). Residues 80–88 and K102 contribute to the ATP site; that span reads IGRGGFGTV. Y147 carries the post-translational modification Phosphotyrosine. D200 functions as the Proton acceptor in the catalytic mechanism. Phosphoserine is present on residues S204 and S234. A phosphothreonine mark is found at T235 and T240. At Y248 the chain carries Phosphotyrosine.

The protein belongs to the protein kinase superfamily. Ser/Thr protein kinase family. As to quaternary structure, interacts with BSU1, BSL1 and BRI1. Phosphorylated at Ser-44, Ser-47 and Ser-234 by BRI1. In terms of tissue distribution, expressed at high levels in the stamen and pollen grains. Expressed at a very low level in vegetative tissues.

It localises to the cell membrane. It catalyses the reaction L-seryl-[protein] + ATP = O-phospho-L-seryl-[protein] + ADP + H(+). It carries out the reaction L-threonyl-[protein] + ATP = O-phospho-L-threonyl-[protein] + ADP + H(+). Its activity is regulated as follows. Activated by phosphorylation at Ser-234. Serine/threonine-protein kinase involved in the positive regulation of brassinosteroid (BR) signaling and plant growth. Mediates BR signal transduction from BRI1 receptor kinase to BSU1 phosphatase. After activation by phosphorylation at Ser-234 by BRI1, CDG1 phosphorylates BSU1 at 'Ser-764' in the phosphatase domain, increasing the ability of BSU1 to inactivate the negative regulator of BR signaling ASK7/BIN2 by dephosphorylation at 'Tyr-200'. The full kinase activity of CDG1 is required for its biological function. The protein is Serine/threonine-protein kinase CDG1 of Arabidopsis thaliana (Mouse-ear cress).